Here is a 394-residue protein sequence, read N- to C-terminus: Elongation factor Tu (394 aa).

Residues 10 to 204 (KPHVNVGTIG…HLDSYIPEPE (195 aa)) form the tr-type G domain. Residues 19–26 (GHVDHGKT) are G1. 19-26 (GHVDHGKT) contributes to the GTP binding site. Position 26 (Thr-26) interacts with Mg(2+). The G2 stretch occupies residues 60–64 (GITIN). The tract at residues 81 to 84 (DCPG) is G3. Residues 81 to 85 (DCPGH) and 136 to 139 (NKCD) contribute to the GTP site. The G4 stretch occupies residues 136-139 (NKCD). The G5 stretch occupies residues 174–176 (SAL).

The protein belongs to the TRAFAC class translation factor GTPase superfamily. Classic translation factor GTPase family. EF-Tu/EF-1A subfamily. In terms of assembly, monomer.

It is found in the cytoplasm. The catalysed reaction is GTP + H2O = GDP + phosphate + H(+). GTP hydrolase that promotes the GTP-dependent binding of aminoacyl-tRNA to the A-site of ribosomes during protein biosynthesis. The polypeptide is Elongation factor Tu (Cronobacter sakazakii (strain ATCC BAA-894) (Enterobacter sakazakii)).